Here is a 684-residue protein sequence, read N- to C-terminus: Cleavage and polyadenylation specificity factor subunit 3 (684 aa).

N-acetylserine is present on serine 2. Zn(2+)-binding residues include histidine 71, histidine 73, aspartate 75, histidine 76, histidine 158, and aspartate 179. Residue histidine 396 is the Proton donor of the active site. A Zn(2+)-binding site is contributed by histidine 418. Glycyl lysine isopeptide (Lys-Gly) (interchain with G-Cter in SUMO) cross-links involve residues lysine 462, lysine 465, and lysine 545. Residue serine 659 is modified to Phosphoserine. A Phosphothreonine modification is found at threonine 681.

Belongs to the metallo-beta-lactamase superfamily. RNA-metabolizing metallo-beta-lactamase-like family. CPSF3 subfamily. In terms of assembly, component of the cleavage and polyadenylation specificity factor (CPSF) complex, composed of CPSF1, CPSF2, CPSF3, CPSF4 and FIP1L1. Interacts with CPSF2, CSTF2 and SYMPK. Interacts with TUT1; the interaction is direct and mediates the recruitment of the CPSF complex on the 3'UTR of pre-mRNAs. Interacts with WDR33. Interacts with ZC3H3. Interacts with ISY1; this interaction is in an RNA independent manner. Interacts with the microprocessor complex subunits DGCR8 and DROSHA; this interaction is in an RNA dependent manner. Zn(2+) is required as a cofactor. Post-translationally, sumoylated on Lys-462, Lys-465 and Lys-545, preferentially by SUMO3.

The protein resides in the nucleus. In terms of biological role, component of the cleavage and polyadenylation specificity factor (CPSF) complex that plays a key role in pre-mRNA 3'-end formation, recognizing the AAUAAA signal sequence and interacting with poly(A) polymerase and other factors to bring about cleavage and poly(A) addition. Has endonuclease activity, and functions as an mRNA 3'-end-processing endonuclease. Also involved in the histone 3'-end pre-mRNA processing. U7 snRNP-dependent protein that induces both the 3' endoribonucleolytic cleavage of histone pre-mRNAs and acts as a 5' to 3' exonuclease for degrading the subsequent downstream cleavage product (DCP) of mature histone mRNAs. Cleavage occurs after the 5'-ACCCA-3' sequence in the histone pre-mRNA leaving a 3'hydroxyl group on the upstream fragment containing the stem loop (SL) and 5' phosphate on the downstream cleavage product (DCP) starting with CU nucleotides. The U7-dependent 5' to 3' exonuclease activity is processive and degrades the DCP RNA substrate even after complete removal of the U7-binding site. Binds to the downstream cleavage product (DCP) of histone pre-mRNAs and the cleaved DCP RNA substrate in a U7 snRNP dependent manner. Required for the selective processing of microRNAs (miRNAs) during embryonic stem cell differentiation via its interaction with ISY1. Required for entering/progressing through S-phase of the cell cycle. Required for the biogenesis of all miRNAs from the pri-miR-17-92 primary transcript except miR-92a. Only required for the biogenesis of miR-290 and miR-96 from the pri-miR-290-295 and pri-miR-96-183 primary transcripts, respectively. The sequence is that of Cleavage and polyadenylation specificity factor subunit 3 (Cpsf3) from Mus musculus (Mouse).